The primary structure comprises 1148 residues: Autophagy-related protein 11 (1148 aa).

Residues 567–570 (FDDI) carry the AIM (Atg8-family-interacting motif) motif. Positions 699–710 (KAEASSDVEGNK) are enriched in basic and acidic residues. Disordered regions lie at residues 699 to 727 (KAEA…CVSN), 754 to 777 (PLDS…EAGE), and 784 to 803 (NSST…ATGR). 2 stretches are compositionally biased toward polar residues: residues 754-767 (PLDS…QNNE) and 784-793 (NSSTAESPQK). Coiled-coil stretches lie at residues 816-868 (ELRN…HLEN) and 956-996 (DKVS…VKTL). Thr-851 carries the post-translational modification Phosphothreonine. Residues 1130–1133 (YFIV) carry the AIM (Atg8-family-interacting motif) motif.

The protein belongs to the ATG11 family. As to quaternary structure, homodimer. Interacts with ATG8E, ATG13A and ATG101. Binds to ATG8E on autophagic vesicles.

The protein localises to the cytoplasmic vesicle. It is found in the autophagosome. Functionally, accessory protein involved in autophagy. Acts as a scaffold protein of the ATG1-ATG13 complex for faithful delivery of autophagic vesicles to the vacuole. Involved in the stress-induced phosphorylation of ATG1A for turnover of ATG1-ATG13 complex and proper ATG1-ATG13 complex assembly or activity. Required for selective mitophagy. Required for senescence-induced breakdown of mitochondria-resident proteins and mitochondrial vesicles. Seems not essential for ATG8-mediated autophagy. The chain is Autophagy-related protein 11 from Arabidopsis thaliana (Mouse-ear cress).